A 148-amino-acid polypeptide reads, in one-letter code: Glyoxalase domain-containing protein 5 (148 aa).

Residues 25-145 (RLDHIVMTVK…DRNLLEVSSY (121 aa)) form the VOC domain.

This sequence belongs to the glyoxalase I family.

The protein is Glyoxalase domain-containing protein 5 (Glod5) of Mus musculus (Mouse).